A 279-amino-acid chain; its full sequence is Shikimate dehydrogenase (NADP(+)) (279 aa).

Residues 21–23 (SKS) and Thr68 each bind shikimate. Lys72 acts as the Proton acceptor in catalysis. Glu84 provides a ligand contact to NADP(+). Residues Asn93 and Asp109 each coordinate shikimate. NADP(+) is bound by residues 133-137 (GAGGA), 157-162 (NRTQAK), and Met220. Tyr222 contributes to the shikimate binding site. NADP(+) is bound at residue Gly244.

It belongs to the shikimate dehydrogenase family. Homodimer.

It carries out the reaction shikimate + NADP(+) = 3-dehydroshikimate + NADPH + H(+). It functions in the pathway metabolic intermediate biosynthesis; chorismate biosynthesis; chorismate from D-erythrose 4-phosphate and phosphoenolpyruvate: step 4/7. Its function is as follows. Involved in the biosynthesis of the chorismate, which leads to the biosynthesis of aromatic amino acids. Catalyzes the reversible NADPH linked reduction of 3-dehydroshikimate (DHSA) to yield shikimate (SA). This chain is Shikimate dehydrogenase (NADP(+)), found in Shewanella halifaxensis (strain HAW-EB4).